A 475-amino-acid chain; its full sequence is Ribulose bisphosphate carboxylase large chain (475 aa).

Residues 1 to 2 (MV) constitute a propeptide that is removed on maturation. Proline 3 is subject to N-acetylproline. An N6,N6,N6-trimethyllysine modification is found at lysine 14. Substrate contacts are provided by asparagine 123 and threonine 173. Lysine 175 (proton acceptor) is an active-site residue. Residue lysine 177 coordinates substrate. Positions 201, 203, and 204 each coordinate Mg(2+). The residue at position 201 (lysine 201) is an N6-carboxylysine. Histidine 294 (proton acceptor) is an active-site residue. Substrate is bound by residues arginine 295, histidine 327, and serine 379.

The protein belongs to the RuBisCO large chain family. Type I subfamily. As to quaternary structure, heterohexadecamer of 8 large chains and 8 small chains. Mg(2+) serves as cofactor.

Its subcellular location is the plastid. It is found in the chloroplast. It carries out the reaction 2 (2R)-3-phosphoglycerate + 2 H(+) = D-ribulose 1,5-bisphosphate + CO2 + H2O. It catalyses the reaction D-ribulose 1,5-bisphosphate + O2 = 2-phosphoglycolate + (2R)-3-phosphoglycerate + 2 H(+). In terms of biological role, ruBisCO catalyzes two reactions: the carboxylation of D-ribulose 1,5-bisphosphate, the primary event in carbon dioxide fixation, as well as the oxidative fragmentation of the pentose substrate in the photorespiration process. Both reactions occur simultaneously and in competition at the same active site. The sequence is that of Ribulose bisphosphate carboxylase large chain from Dunaliella tertiolecta (Green alga).